We begin with the raw amino-acid sequence, 199 residues long: uncharacterized protein (199 aa).

This is an uncharacterized protein from Borreliella burgdorferi (strain ATCC 35210 / DSM 4680 / CIP 102532 / B31) (Borrelia burgdorferi).